The sequence spans 314 residues: Lipid A biosynthesis acyltransferase 2 (314 aa).

Residues leucine 17–phenylalanine 37 form a helical membrane-spanning segment. An HXXXXD motif motif is present at residues histidine 137–aspartate 142.

This sequence belongs to the LpxL/LpxM/LpxP family. LpxM subfamily.

Its subcellular location is the cell inner membrane. The enzyme catalyses an alpha-Kdo-(2-&gt;4)-alpha-Kdo-(2-&gt;6)-(acyl)-lipid IVA + a fatty acyl-[ACP] = an alpha-Kdo-(2-&gt;4)-alpha-Kdo-(2-&gt;6)-lipid A + holo-[ACP]. It participates in glycolipid biosynthesis; KDO(2)-lipid A biosynthesis; KDO(2)-lipid A from CMP-3-deoxy-D-manno-octulosonate and lipid IV(A): step 4/4. Its pathway is bacterial outer membrane biogenesis; lipopolysaccharide biosynthesis. Its function is as follows. Catalyzes the transfer of an acyl chain from an acyl-[acyl-carrier-protein] (ACP) to a Kdo(2)-(acyl)-lipid IV(A) to form a Kdo(2)-lipid A. The sequence is that of Lipid A biosynthesis acyltransferase 2 from Shigella flexneri.